The sequence spans 131 residues: Profilin-5 (131 aa).

An intrachain disulfide couples cysteine 13 to cysteine 115. The Involved in PIP2 interaction signature appears at 81 to 97 (VVIRGKKGTGGITIKKT). Phosphothreonine is present on threonine 111.

It belongs to the profilin family. As to quaternary structure, multimer. Occurs in many kinds of cells as a complex with monomeric actin in a 1:1 ratio. In terms of processing, phosphorylated by MAP kinases. As to expression, expressed in vegetative tissues. Present in shoots, roots and coleoptiles. Also detected in endosperm and pollen.

The protein resides in the cytoplasm. The protein localises to the cytoskeleton. With respect to regulation, actin binding is enhanced by calcium Ca(2+). Its function is as follows. Binds to actin and affects the structure of the cytoskeleton. At high concentrations, profilin prevents the polymerization of actin, whereas it enhances it at low concentrations. By binding to PIP2, it inhibits the formation of IP3 and DG. Has a high affinity for poly-proline. This is Profilin-5 from Zea mays (Maize).